We begin with the raw amino-acid sequence, 199 residues long: Probable chemoreceptor glutamine deamidase CheD (199 aa).

The protein belongs to the CheD family.

It carries out the reaction L-glutaminyl-[protein] + H2O = L-glutamyl-[protein] + NH4(+). Functionally, probably deamidates glutamine residues to glutamate on methyl-accepting chemotaxis receptors (MCPs), playing an important role in chemotaxis. The polypeptide is Probable chemoreceptor glutamine deamidase CheD (Cereibacter sphaeroides (strain ATCC 17025 / ATH 2.4.3) (Rhodobacter sphaeroides)).